A 731-amino-acid polypeptide reads, in one-letter code: 1,4-alpha-glucan branching enzyme GlgB (731 aa).

D412 functions as the Nucleophile in the catalytic mechanism. E465 (proton donor) is an active-site residue.

This sequence belongs to the glycosyl hydrolase 13 family. GlgB subfamily. As to quaternary structure, monomer.

It catalyses the reaction Transfers a segment of a (1-&gt;4)-alpha-D-glucan chain to a primary hydroxy group in a similar glucan chain.. It functions in the pathway glycan biosynthesis; glycogen biosynthesis. In terms of biological role, catalyzes the formation of the alpha-1,6-glucosidic linkages in glycogen by scission of a 1,4-alpha-linked oligosaccharide from growing alpha-1,4-glucan chains and the subsequent attachment of the oligosaccharide to the alpha-1,6 position. This chain is 1,4-alpha-glucan branching enzyme GlgB, found in Bordetella pertussis (strain Tohama I / ATCC BAA-589 / NCTC 13251).